Here is a 470-residue protein sequence, read N- to C-terminus: tRNA-2-methylthio-N(6)-dimethylallyladenosine synthase (470 aa).

Residues 1–116 (MTYTVRTYGC…LPALLRRSRH (116 aa)) enclose the MTTase N-terminal domain. Residues Cys-10, Cys-45, Cys-79, Cys-153, Cys-157, and Cys-160 each coordinate [4Fe-4S] cluster. The 231-residue stretch at 139 to 369 (RESNYSAWVS…LDLQNRIALE (231 aa)) folds into the Radical SAM core domain. The TRAM domain occupies 372–439 (RKLIGKEVEL…PYHLIGDNAL (68 aa)).

It belongs to the methylthiotransferase family. MiaB subfamily. Monomer. The cofactor is [4Fe-4S] cluster.

The protein localises to the cytoplasm. The enzyme catalyses N(6)-dimethylallyladenosine(37) in tRNA + (sulfur carrier)-SH + AH2 + 2 S-adenosyl-L-methionine = 2-methylsulfanyl-N(6)-dimethylallyladenosine(37) in tRNA + (sulfur carrier)-H + 5'-deoxyadenosine + L-methionine + A + S-adenosyl-L-homocysteine + 2 H(+). Its function is as follows. Catalyzes the methylthiolation of N6-(dimethylallyl)adenosine (i(6)A), leading to the formation of 2-methylthio-N6-(dimethylallyl)adenosine (ms(2)i(6)A) at position 37 in tRNAs that read codons beginning with uridine. The chain is tRNA-2-methylthio-N(6)-dimethylallyladenosine synthase from Tropheryma whipplei (strain Twist) (Whipple's bacillus).